The following is a 2568-amino-acid chain: Highly reducing polyketide synthase AN6791 (2568 aa).

Residues 11–445 (AEPIAIVGLS…GTNAHLIVES (435 aa)) form the Ketosynthase family 3 (KS3) domain. Residues Cys-200, His-326, and His-366 each act as for beta-ketoacyl synthase activity in the active site. One can recognise a Malonyl-CoA:ACP transacylase (MAT) domain in the interval 558-882 (VFTGQGAQWY…GSLVREVSAV (325 aa)). The N-terminal hotdog fold stretch occupies residues 949-1087 (HDLLGSLVLG…GLITMEPEDA (139 aa)). Residues 949 to 1258 (HDLLGSLVLG…FQSVGRSAAP (310 aa)) enclose the PKS/mFAS DH domain. The active-site Proton acceptor; for dehydratase activity is His-981. The tract at residues 1104–1258 (TRRFGPSDLY…FQSVGRSAAP (155 aa)) is C-terminal hotdog fold. The active-site Proton donor; for dehydratase activity is Asp-1169. Residues 1311 to 1620 (RACLYFIYDA…EVRDCESDEW (310 aa)) are methyltransferase (CMet) domain. Positions 1857 to 2174 (GLLDTIAFDD…VGKHSGKVVL (318 aa)) constitute an Enoyl reductase (ER) domain. The Ketoreductase (KR) domain maps to 2197–2375 (ASYLLVGGAG…AVSMDLGPVK (179 aa)). One can recognise a Carrier domain in the interval 2481 to 2558 (QAEKLVVEAI…ALASEVTRKS (78 aa)). Ser-2518 carries the O-(pantetheine 4'-phosphoryl)serine modification.

Pantetheine 4'-phosphate serves as cofactor.

Its pathway is secondary metabolite biosynthesis. Highly reducing polyketide synthase; part of a cluster that mediates the biosynthesis of a yet undetermined secondary metabolite. With esterase AN6793, produces a pathway intermediate compound with molecular weight 258. This chain is Highly reducing polyketide synthase AN6791, found in Emericella nidulans (strain FGSC A4 / ATCC 38163 / CBS 112.46 / NRRL 194 / M139) (Aspergillus nidulans).